Reading from the N-terminus, the 219-residue chain is Probable GTP-binding protein EngB (219 aa).

One can recognise an EngB-type G domain in the interval 24-207; sequence VQPEVAFAGR…HALIESWVRP (184 aa). GTP contacts are provided by residues 32 to 39, 59 to 63, 81 to 84, 148 to 151, and 185 to 188; these read GRSNAGKS, GRTQH, DLPG, TKCD, and LFSA. Mg(2+) is bound by residues S39 and T61.

It belongs to the TRAFAC class TrmE-Era-EngA-EngB-Septin-like GTPase superfamily. EngB GTPase family. Requires Mg(2+) as cofactor.

Necessary for normal cell division and for the maintenance of normal septation. This Burkholderia mallei (strain ATCC 23344) protein is Probable GTP-binding protein EngB.